Here is a 199-residue protein sequence, read N- to C-terminus: Glycerol-3-phosphate acyltransferase (199 aa).

Helical transmembrane passes span 4–24, 51–71, 77–97, 111–131, and 152–172; these read LVSVAILGYLLGSIPVGFLMG, WAALFTVLCDIGKGLLAAYLG, EWGFVAAGLLASLGHSYPVWL, VMLLHYPLAVLVGIAAGALAV, and LFLLDAPLSHRLLVVALAVVI.

This sequence belongs to the PlsY family. As to quaternary structure, probably interacts with PlsX.

Its subcellular location is the cell membrane. The catalysed reaction is an acyl phosphate + sn-glycerol 3-phosphate = a 1-acyl-sn-glycero-3-phosphate + phosphate. It functions in the pathway lipid metabolism; phospholipid metabolism. Its function is as follows. Catalyzes the transfer of an acyl group from acyl-phosphate (acyl-PO(4)) to glycerol-3-phosphate (G3P) to form lysophosphatidic acid (LPA). This enzyme utilizes acyl-phosphate as fatty acyl donor, but not acyl-CoA or acyl-ACP. The sequence is that of Glycerol-3-phosphate acyltransferase from Symbiobacterium thermophilum (strain DSM 24528 / JCM 14929 / IAM 14863 / T).